Reading from the N-terminus, the 640-residue chain is PTS system mannitol-specific EIICBA component (640 aa).

Residues 12–343 enclose the PTS EIIC type-2 domain; it reads LGRFLSAMIM…LKISNRNHYV (332 aa). 6 helical membrane-spanning segments follow: residues 24-45, 50-70, 134-155, 165-185, 273-292, and 313-334; these read ISVF…WCPN, KVLS…TGGY, SVGI…PMIE, VNLM…EPAK, LILG…GGLI, and VINL…CMLL. Positions 379–475 constitute a PTS EIIB type-2 domain; that stretch reads RNIIFACDAG…YLVENNLDNN (97 aa). Cysteine 385 (phosphocysteine intermediate; for EIIB activity) is an active-site residue. Cysteine 385 is subject to Phosphocysteine; by EIIA. In terms of domain architecture, PTS EIIA type-2 spans 496 to 638; that stretch reads FSLTKENIFL…DDVLYLFSRK (143 aa). Histidine 556 (tele-phosphohistidine intermediate; for EIIA activity) is an active-site residue. Histidine 556 is modified (phosphohistidine; by HPr).

As to quaternary structure, homodimer. Post-translationally, an intramolecular phosphotransfer takes places between His-556 and Cys-385.

It is found in the cell inner membrane. The enzyme catalyses D-mannitol(out) + N(pros)-phospho-L-histidyl-[protein] = D-mannitol 1-phosphate(in) + L-histidyl-[protein]. Its function is as follows. The phosphoenolpyruvate-dependent sugar phosphotransferase system (sugar PTS), a major carbohydrate active transport system, catalyzes the phosphorylation of incoming sugar substrates concomitantly with their translocation across the cell membrane. This system is involved in D-mannitol transport. This is PTS system mannitol-specific EIICBA component (mtlA) from Buchnera aphidicola subsp. Baizongia pistaciae (strain Bp).